The sequence spans 652 residues: Carboxypeptidase S1 homolog A (652 aa).

Positions 1-19 are cleaved as a signal peptide; the sequence is MRLAASIAVALPVIGAASA. The cysteines at positions 50 and 121 are disulfide-linked. 6 N-linked (GlcNAc...) asparagine glycosylation sites follow: Asn77, Asn132, Asn161, Asn168, Asn184, and Asn202. The active site involves Ser238. Residues Asn260, Asn299, Asn347, and Asn410 are each glycosylated (N-linked (GlcNAc...) asparagine). 2 disulfides stabilise this stretch: Cys325-Cys361 and Cys332-Cys354. Residue Asp458 is part of the active site. Substrate is bound at residue Cys461. N-linked (GlcNAc...) asparagine glycans are attached at residues Asn474, Asn492, and Asn505. His516 is an active-site residue. Residue Glu517 coordinates substrate. Asn594 carries N-linked (GlcNAc...) asparagine glycosylation. Residues 608-628 are disordered; the sequence is AASKGNPPPTTTSSPTASPTA. The segment covering 618–628 has biased composition (low complexity); the sequence is TTSSPTASPTA. Gly629 is lipidated: GPI-anchor amidated glycine. Residues 630–652 constitute a propeptide, removed in mature form; the sequence is SAMLKAPVAMLAISALTVLAFYL.

It belongs to the peptidase S10 family.

The protein localises to the cell membrane. The enzyme catalyses Preferential release of a C-terminal arginine or lysine residue.. Extracellular serine carboxypeptidase that contributes to pathogenicity. The polypeptide is Carboxypeptidase S1 homolog A (SCPA) (Trichophyton verrucosum (strain HKI 0517)).